Consider the following 195-residue polypeptide: MIIGVLSVQGGFVEHMRSIERLGHEARAVRRAEQLEGLDGLIMPGGESTTMSKLLELGGMLEPLRELIADGLPVFGTCAGLILLADRVLDTRSDAHSLHAMDITVRRNAFGRQVDSFETQLPFGDIDTPVEAVFIRAPKVEEVGDGVEVVSTLPDGTVVGVRQGNVLGCSFHPELSEDDRVHEYFLRMVKQRGVE.

An L-glutamine-binding site is contributed by 46–48; sequence GES. The active-site Nucleophile is the cysteine 78. Residues arginine 107 and 135 to 136 each bind L-glutamine; that span reads IR. Active-site charge relay system residues include histidine 172 and glutamate 174.

This sequence belongs to the glutaminase PdxT/SNO family. In the presence of PdxS, forms a dodecamer of heterodimers. Only shows activity in the heterodimer.

It catalyses the reaction aldehydo-D-ribose 5-phosphate + D-glyceraldehyde 3-phosphate + L-glutamine = pyridoxal 5'-phosphate + L-glutamate + phosphate + 3 H2O + H(+). It carries out the reaction L-glutamine + H2O = L-glutamate + NH4(+). The protein operates within cofactor biosynthesis; pyridoxal 5'-phosphate biosynthesis. Its function is as follows. Catalyzes the hydrolysis of glutamine to glutamate and ammonia as part of the biosynthesis of pyridoxal 5'-phosphate. The resulting ammonia molecule is channeled to the active site of PdxS. This chain is Pyridoxal 5'-phosphate synthase subunit PdxT, found in Corynebacterium jeikeium (strain K411).